Consider the following 109-residue polypeptide: RNA-binding protein Hfq (109 aa).

The region spanning Asp-9–Val-68 is the Sm domain. A disordered region spans residues Pro-77–Glu-109.

The protein belongs to the Hfq family. Homohexamer.

Its function is as follows. RNA chaperone that binds small regulatory RNA (sRNAs) and mRNAs to facilitate mRNA translational regulation in response to envelope stress, environmental stress and changes in metabolite concentrations. Also binds with high specificity to tRNAs. The protein is RNA-binding protein Hfq of Francisella tularensis subsp. mediasiatica (strain FSC147).